The chain runs to 319 residues: uncharacterized protein (319 aa).

Residues 270 to 290 (AAALWWIPAWLAMIVEVAVLG) form a helical membrane-spanning segment.

The protein localises to the membrane. This is an uncharacterized protein from Mycobacterium tuberculosis (strain CDC 1551 / Oshkosh).